A 714-amino-acid chain; its full sequence is ABC transporter B family member 28 (714 aa).

5 helical membrane-spanning segments follow: residues Leu-109–Phe-129, Ile-161–Leu-181, Ile-240–Ala-260, Val-340–Gly-360, and Glu-361–Val-381. Residues Leu-109–Gly-393 form the ABC transmembrane type-1 domain. One can recognise an ABC transporter domain in the interval Val-470 to Thr-708. Residue Gly-505–Ser-512 participates in ATP binding.

The protein belongs to the ABC transporter superfamily. ABCB family. Multidrug resistance exporter (TC 3.A.1.201) subfamily.

The protein resides in the membrane. The sequence is that of ABC transporter B family member 28 (ABCB28) from Arabidopsis thaliana (Mouse-ear cress).